A 1321-amino-acid polypeptide reads, in one-letter code: Bile salt export pump (1321 aa).

Residues 1 to 62 (MSDSVILRSV…FSSSKDIWLM (62 aa)) are Cytoplasmic-facing. In terms of domain architecture, ABC transmembrane type-1 1 spans 62–385 (MLMGGVCALL…ASSCLEIFST (324 aa)). The chain crosses the membrane as a helical span at residues 63–83 (LMGGVCALLHGMAQPGILIIF). At 84 to 147 (GIMTDIFIKY…MIKFSGIYAG (64 aa)) the chain is on the extracellular side. 4 N-linked (GlcNAc...) asparagine glycosylation sites follow: Asn109, Asn116, Asn122, and Asn125. A helical membrane pass occupies residues 148–168 (VGMTVLILGYFQIRLWVITGA). The Cytoplasmic portion of the chain corresponds to 169–215 (RQIRRMRKIYFRRIMRMEIGWFDCTSVGELNSRFADDIEKINDAIAD). Residues 216–236 (QLAHFLQRMSTAMCGLLLGFY) form a helical membrane-spanning segment. The Extracellular segment spans residues 237–240 (RGWK). Residues 241-261 (LTLVILAVSPLIGIGAAVIGL) traverse the membrane as a helical segment. Topologically, residues 262 to 319 (SIAKFTELELKAYAKAGSIADEVLSSIRTVAAFGGENKEVERYEKNLVFAQRWGIWKG) are cytoplasmic. A helical membrane pass occupies residues 320–340 (MVMGFFTGYMWCLIFFCYALA). The Extracellular portion of the chain corresponds to 341-353 (FWYGSTLVLDEEE). The helical transmembrane segment at 354–374 (YTPGTLVQIFLCVILAAMNIG) threads the bilayer. Over 375 to 755 (HASSCLEIFS…KYNIPEWHYI (381 aa)) the chain is Cytoplasmic. The 237-residue stretch at 420–656 (IEFHNVTFHY…KGVYFMLVTL (237 aa)) folds into the ABC transporter 1 domain. Residue 455–462 (GSSGAGKS) participates in ATP binding. At Thr586 the chain carries Phosphothreonine. Ser587 carries the post-translational modification Phosphoserine. Residues 651 to 674 (FMLVTLQSQGDNAHKETSIMGKDA) form an interaction with HAX1 region. A phosphoserine mark is found at Ser692, Ser703, and Ser706. An ABC transmembrane type-1 2 domain is found at 755 to 1043 (ILVGSLSAAI…TFSYTPSYAK (289 aa)). Residues 756-776 (LVGSLSAAINGAVTPIYSLLF) form a helical membrane-spanning segment. Residues 777–794 (SQLLGTFSLLDKEQQRSE) are Extracellular-facing. Residues 795-815 (IHSMCLFFVILGCVSIFTQFL) traverse the membrane as a helical segment. The Cytoplasmic portion of the chain corresponds to 816–869 (QGYTFAKSGELLTKRLRKFGFKAMLGQDIGWFDDLRNNPGVLTTRLATDASQVQ). Transmembrane regions (helical) follow at residues 870–890 (GATG…IAAL) and 891–911 (LIAF…FPFL). The Cytoplasmic segment spans residues 912–979 (ALSGAVQTKM…SYKTAVRKAN (68 aa)). The helical transmembrane segment at 980 to 1000 (IYGLCFAFSQGIAFLANSAAY) threads the bilayer. The Extracellular segment spans residues 1001-1011 (RYGGYLIAYEG). A helical membrane pass occupies residues 1012–1032 (LGFSHVFRVVSSVALSATAVG). The Cytoplasmic segment spans residues 1033–1321 (RTFSYTPSYA…KLVITGAPIS (289 aa)). In terms of domain architecture, ABC transporter 2 spans 1078–1316 (IDFIDCKFTY…KGAYYKLVIT (239 aa)). Residue 1113–1120 (GSSGCGKS) participates in ATP binding. Ser1321 bears the Phosphoserine mark.

It belongs to the ABC transporter superfamily. ABCB family. Multidrug resistance exporter (TC 3.A.1.201) subfamily. In terms of assembly, interacts with HAX1. Interacts with the adapter protein complex 2 (AP-2) throught AP2A2 or AP2A1; this interaction regulates cell membrane expression of ABCB11 through its internalization in a clathrin-dependent manner and its subsequent degradation. Ubiquitinated; short-chain ubiquitination regulates cell-Surface expression of ABCB11. Post-translationally, N-glycosylated. As to expression, expressed predominantly, if not exclusively in the liver, where it was further localized to the canalicular microvilli and to subcanalicular vesicles of the hepatocytes by in situ.

Its subcellular location is the apical cell membrane. It is found in the recycling endosome membrane. The protein resides in the endosome. The protein localises to the cell membrane. The catalysed reaction is cholate(in) + ATP + H2O = cholate(out) + ADP + phosphate + H(+). It carries out the reaction taurocholate(in) + ATP + H2O = taurocholate(out) + ADP + phosphate + H(+). The enzyme catalyses glycocholate(in) + ATP + H2O = glycocholate(out) + ADP + phosphate + H(+). It catalyses the reaction glycochenodeoxycholate(in) + ATP + H2O = glycochenodeoxycholate(out) + ADP + phosphate + H(+). The catalysed reaction is taurochenodeoxycholate(in) + ATP + H2O = taurochenodeoxycholate(out) + ADP + phosphate + H(+). It carries out the reaction glycoursodeoxycholate(in) + ATP + H2O = glycoursodeoxycholate(out) + ADP + phosphate + H(+). The enzyme catalyses tauroursodeoxycholate(in) + ATP + H2O = tauroursodeoxycholate(out) + ADP + phosphate + H(+). It catalyses the reaction taurodeoxycholate(in) + ATP + H2O = taurodeoxycholate(out) + ADP + phosphate + H(+). The catalysed reaction is pravastatin(in) + ATP + H2O = pravastatin(out) + ADP + phosphate + H(+). The uptake of taurocholate is inhibited by taurolithocholate sulfate with an IC(50) of 52.9 uM. Pravastatin competitively inhibits the transport of taurocholic acid. Cyclosporin A, glibenclamide, rifampicin and troglitazonestrongly competitively inhibit the transport activity of taurocholate. The canalicular transport activity of taurocholate is strongly dependent on canalicular membrane cholesterol content. The uptake of taurocholate is increased by short- and medium-chain fatty acids. Cholesterol increases transport capacity of taurocholate without affecting the affinity for the substrate. Functionally, catalyzes the transport of the major hydrophobic bile salts, such as taurine and glycine-conjugated cholic acid across the canalicular membrane of hepatocytes in an ATP-dependent manner, therefore participates in hepatic bile acid homeostasis and consequently to lipid homeostasis through regulation of biliary lipid secretion in a bile salts dependent manner. Transports taurine-conjugated bile salts more rapidly than glycine-conjugated bile salts. Also transports non-bile acid compounds, such as pravastatin and fexofenadine in an ATP-dependent manner and may be involved in their biliary excretion. In Rattus norvegicus (Rat), this protein is Bile salt export pump.